Here is a 313-residue protein sequence, read N- to C-terminus: E3 ubiquitin-protein ligase RNF126 (313 aa).

The residue at position 2 (A2) is an N-acetylalanine. A Phosphoserine modification is found at S5. The tract at residues 5–100 (SPQPGRYFCH…FEIPTFPPGA (96 aa)) is required for interaction with BAG6. Residues C13, C16, C29, and C32 each coordinate Zn(2+). The segment at 13 to 32 (CHCCSVEIVPRLPDYICPRC) adopts a C4-type zinc-finger fold. Disordered regions lie at residues 42–63 (EETRNTENGSAPSTAPTDQNRQ) and 95–128 (TFPPGAQADDGRDPESRREREHQSRHRYGARQPR). Polar residues predominate over residues 47 to 63 (TENGSAPSTAPTDQNRQ). Residues 103–116 (DDGRDPESRREREH) show a composition bias toward basic and acidic residues. Basic residues predominate over residues 117–128 (QSRHRYGARQPR). Positions 202–306 (TGPPPADKEK…SSSSSSSPSN (105 aa)) are sufficient for interaction with AICDA. An RING-type zinc finger spans residues 231–272 (CPVCKEDYALGESVRQLPCNHLFHDSCIVPWLEQHDSCPVCR). Positions 279–313 (NTATNPPGLTGVGFSSSSSSSSSSSPSNENATSNS) are disordered. Positions 293 to 313 (SSSSSSSSSSSPSNENATSNS) are enriched in low complexity.

As to quaternary structure, interacts with CCDC50, EGFR, FLT3 and SCAMP3. Interacts with BAG6 (via ubiquitin-like domain); required for BAG6-dependent ubiquitination of proteins mislocalized to the cytosol. Interacts with CDKN1A. Interacts with AICDA. In terms of processing, ubiquitinated. May undergo autoubiquitination. Detected in B-cells (at protein level).

Its subcellular location is the cytoplasm. The protein resides in the nucleus. It carries out the reaction S-ubiquitinyl-[E2 ubiquitin-conjugating enzyme]-L-cysteine + [acceptor protein]-L-lysine = [E2 ubiquitin-conjugating enzyme]-L-cysteine + N(6)-ubiquitinyl-[acceptor protein]-L-lysine.. The protein operates within protein modification; protein ubiquitination. E3 ubiquitin-protein ligase that mediates ubiquitination oF target proteins. Depending on the associated E2 ligase, mediates 'Lys-27'-, 'Lys-29'-, 'Lys-48'- and/or 'Lys-63'-linked polyubiquitination of substrates. Part of a BAG6-dependent quality control process ensuring that proteins of the secretory pathway that are mislocalized to the cytosol are degraded by the proteasome. Probably acts by providing the ubiquitin ligase activity associated with the BAG6 complex and be responsible for ubiquitination of the hydrophobic mislocalized proteins and their targeting to the proteasome. May also play a role in the endosomal recycling of IGF2R, the cation-independent mannose-6-phosphate receptor. May play a role in the endosomal sorting and degradation of several membrane receptors including EGFR, FLT3, MET and CXCR4, by mediating their ubiquitination. By ubiquitinating CDKN1A/p21 and targeting it for degradation, may also promote cell proliferation. May monoubiquitinate AICDA. Acts as a regulator of DNA repair by mediating 'Lys-27'- and 'Lys-29'-linked polyubiquitination of MRE11, thereby promoting the exonuclease activity of MRE11. This Mus musculus (Mouse) protein is E3 ubiquitin-protein ligase RNF126.